The chain runs to 646 residues: Serine/threonine-protein kinase PLK3 (646 aa).

The tract at residues 1–35 (MEPAAGFLSPRPFQRAAAAPAPPAGPGPPPSALRG) is disordered. The segment covering 10–19 (PRPFQRAAAA) has biased composition (low complexity). A compositionally biased stretch (pro residues) spans 20-31 (PAPPAGPGPPPS). Residues 62–314 (YLKGRLLGKG…IDQILRHDFF (253 aa)) form the Protein kinase domain. ATP-binding positions include 68–76 (LGKGGFARC) and Lys91. Asp185 serves as the catalytic Proton acceptor. The disordered stretch occupies residues 381 to 417 (GHQDARPEAPAASGPAPVSLVETAPEDSSPRGTLASS). 2 consecutive POLO box domains span residues 463–541 (WVSK…YMEQ) and 562–645 (LLLQ…DRSP).

Belongs to the protein kinase superfamily. Ser/Thr protein kinase family. CDC5/Polo subfamily. Interacts (via the POLO-box domain) with CIB1; leading to inhibit PLK3 kinase activity. Interacts with GOLGB1. In terms of processing, phosphorylated in an ATM-dependent manner following DNA damage. Phosphorylated as cells enter mitosis and dephosphorylated as cells exit mitosis. In terms of tissue distribution, transcripts are highly detected in placenta, lung, followed by skeletal muscle, heart, pancreas, ovaries and kidney and weakly detected in liver and brain. May have a short half-live. In cells of hematopoietic origin, strongly and exclusively detected in terminally differentiated macrophages. Transcript expression appears to be down-regulated in primary lung tumor.

It is found in the cytoplasm. It localises to the nucleus. The protein localises to the nucleolus. The protein resides in the golgi apparatus. Its subcellular location is the cytoskeleton. It is found in the microtubule organizing center. It localises to the centrosome. The enzyme catalyses L-seryl-[protein] + ATP = O-phospho-L-seryl-[protein] + ADP + H(+). It carries out the reaction L-threonyl-[protein] + ATP = O-phospho-L-threonyl-[protein] + ADP + H(+). Its function is as follows. Serine/threonine-protein kinase involved in cell cycle regulation, response to stress and Golgi disassembly. Polo-like kinases act by binding and phosphorylating proteins that are already phosphorylated on a specific motif recognized by the POLO box domains. Phosphorylates ATF2, BCL2L1, CDC25A, CDC25C, CHEK2, HIF1A, JUN, p53/TP53, p73/TP73, PTEN, TOP2A and VRK1. Involved in cell cycle regulation: required for entry into S phase and cytokinesis. Phosphorylates BCL2L1, leading to regulate the G2 checkpoint and progression to cytokinesis during mitosis. Plays a key role in response to stress: rapidly activated upon stress stimulation, such as ionizing radiation, reactive oxygen species (ROS), hyperosmotic stress, UV irradiation and hypoxia. Involved in DNA damage response and G1/S transition checkpoint by phosphorylating CDC25A, p53/TP53 and p73/TP73. Phosphorylates p53/TP53 in response to reactive oxygen species (ROS), thereby promoting p53/TP53-mediated apoptosis. Phosphorylates CHEK2 in response to DNA damage, promoting the G2/M transition checkpoint. Phosphorylates the transcription factor p73/TP73 in response to DNA damage, leading to inhibit p73/TP73-mediated transcriptional activation and pro-apoptotic functions. Phosphorylates HIF1A and JUN is response to hypoxia. Phosphorylates ATF2 following hyperosmotic stress in corneal epithelium. Also involved in Golgi disassembly during the cell cycle: part of a MEK1/MAP2K1-dependent pathway that induces Golgi fragmentation during mitosis by mediating phosphorylation of VRK1. May participate in endomitotic cell cycle, a form of mitosis in which both karyokinesis and cytokinesis are interrupted and is a hallmark of megakaryocyte differentiation, via its interaction with CIB1. The polypeptide is Serine/threonine-protein kinase PLK3 (PLK3) (Homo sapiens (Human)).